We begin with the raw amino-acid sequence, 515 residues long: Bifunctional purine biosynthesis protein PurH (515 aa).

Residues 1–145 (MTKRALISVS…KNHASVTVVV (145 aa)) form the MGS-like domain.

The protein belongs to the PurH family.

It carries out the reaction (6R)-10-formyltetrahydrofolate + 5-amino-1-(5-phospho-beta-D-ribosyl)imidazole-4-carboxamide = 5-formamido-1-(5-phospho-D-ribosyl)imidazole-4-carboxamide + (6S)-5,6,7,8-tetrahydrofolate. The catalysed reaction is IMP + H2O = 5-formamido-1-(5-phospho-D-ribosyl)imidazole-4-carboxamide. Its pathway is purine metabolism; IMP biosynthesis via de novo pathway; 5-formamido-1-(5-phospho-D-ribosyl)imidazole-4-carboxamide from 5-amino-1-(5-phospho-D-ribosyl)imidazole-4-carboxamide (10-formyl THF route): step 1/1. The protein operates within purine metabolism; IMP biosynthesis via de novo pathway; IMP from 5-formamido-1-(5-phospho-D-ribosyl)imidazole-4-carboxamide: step 1/1. This chain is Bifunctional purine biosynthesis protein PurH, found in Streptococcus equi subsp. zooepidemicus (strain H70).